Reading from the N-terminus, the 364-residue chain is DNA polymerase IV (364 aa).

Residues 6 to 194 (VFHIDFDYFY…LKIRDIPGIG (189 aa)) enclose the UmuC domain. Mg(2+) is bound by residues Asp-10 and Asp-111. Glu-112 is a catalytic residue.

This sequence belongs to the DNA polymerase type-Y family. In terms of assembly, monomer. Mg(2+) is required as a cofactor.

It localises to the cytoplasm. The enzyme catalyses DNA(n) + a 2'-deoxyribonucleoside 5'-triphosphate = DNA(n+1) + diphosphate. Poorly processive, error-prone DNA polymerase involved in untargeted mutagenesis. Copies undamaged DNA at stalled replication forks, which arise in vivo from mismatched or misaligned primer ends. These misaligned primers can be extended by PolIV. Exhibits no 3'-5' exonuclease (proofreading) activity. May be involved in translesional synthesis. The protein is DNA polymerase IV of Nitrosopumilus maritimus (strain SCM1).